Reading from the N-terminus, the 58-residue chain is Dortoxin (58 aa).

Positions 3–58 (VPGNYPLDKDGNTYTCLKLGENKDCQKVCKLHGVQYGYCYAFECWCKEYLDDKDSV) constitute an LCN-type CS-alpha/beta domain. Intrachain disulfides connect Cys18–Cys41, Cys27–Cys46, and Cys31–Cys48.

As to expression, expressed by the venom gland.

The protein localises to the secreted. Functionally, binds to sodium channels (Nav) and affects the channel activation process. In mice, causes hyperactivity that persists until death. The sequence is that of Dortoxin from Parabuthus transvaalicus (Transvaal thick-tailed scorpion).